We begin with the raw amino-acid sequence, 1114 residues long: Constitutive coactivator of PPAR-gamma-like protein 1 (1114 aa).

The interval 339–402 is interaction with YES1, SRC and FYN; that stretch reads PPHYLARPNP…YNLAEPALTL (64 aa). 2 disordered regions span residues 372–396 and 411–519; these read QAKP…YNLA and EQNY…GNQI. The span at 431-443 shows a compositional bias: polar residues; that stretch reads SPINPAPSGSPNH. Basic and acidic residues predominate over residues 477-498; that stretch reads GWEKTGSHSEPQARGDPGDQTK. Residues 499–510 show a composition bias toward polar residues; that stretch reads AEGSSTASSGSQ. Thr651 bears the Phosphothreonine mark. The tract at residues 825–1114 is RNA binding; it reads AEQAAKVEKM…LEAAVLKKEE (290 aa). 3 positions are modified to omega-N-methylarginine: Arg869, Arg880, and Arg882. The tract at residues 918-940 is disordered; that stretch reads FSGSDSSRTSKSQGGIQPIPSQG. Lys928 carries the post-translational modification N6-acetyllysine. The span at 929–940 shows a compositional bias: low complexity; sequence SQGGIQPIPSQG. Ser956 is modified (phosphoserine). 2 positions are modified to omega-N-methylarginine: Arg978 and Arg982. The interval 1009 to 1099 is disordered; it reads AIQGKPPYAA…LNALSTDSGC (91 aa). Ser1019 is subject to Phosphoserine. The span at 1022-1033 shows a compositional bias: basic and acidic residues; that stretch reads EVAKELKSRSGE. Residues 1034–1043 are compositionally biased toward polar residues; it reads SKSSAMSSDG. Residues Ser1040, Ser1041, and Ser1044 each carry the phosphoserine modification. Residues 1060–1097 are compositionally biased toward polar residues; that stretch reads MNGSAGDTRAPSHSESALNNDSKTCNTNPHLNALSTDS.

It belongs to the constitutive coactivator of PPAR-gamma family. In terms of assembly, interacts with PURA. Interacts with YES1, SRC, FYN. Upon tyrosine phosphorylation, interacts with PIK3R1. In terms of processing, arg-978 is dimethylated, probably to asymmetric dimethylarginine. Phosphorylated on tyrosine by src family kinases upon ultraviolet exposure.

The protein localises to the cytoplasm. The protein resides in the cell membrane. In terms of biological role, component of the oxidative stress-induced survival signaling. May regulate the activation of SRC family protein kinases. May act as a scaffolding protein enabling SRC family protein kinases to phosphorylate and activate PI3-kinase. Binds IGF2 RNA and promotes the production of IGF2 protein. The sequence is that of Constitutive coactivator of PPAR-gamma-like protein 1 (FAM120A) from Bos taurus (Bovine).